The following is a 605-amino-acid chain: SET domain-containing protein SNOG_11806 (605 aa).

The tract at residues 68-132 (TLDLTGMKTP…SRKGTGGLRV (65 aa)) is disordered. Positions 75-89 (KTPQPSRSPTVTRNV) are enriched in polar residues. The segment covering 104–115 (ESADDDDDDLQD) has biased composition (acidic residues). One can recognise an SET domain in the interval 473–579 (PPVQIYRTAE…AGSEITVDYG (107 aa)).

Belongs to the class V-like SAM-binding methyltransferase superfamily.

This chain is SET domain-containing protein SNOG_11806, found in Phaeosphaeria nodorum (strain SN15 / ATCC MYA-4574 / FGSC 10173) (Glume blotch fungus).